The sequence spans 332 residues: 5-dehydro-2-deoxygluconokinase (332 aa).

The protein belongs to the carbohydrate kinase PfkB family.

It carries out the reaction 5-dehydro-2-deoxy-D-gluconate + ATP = 6-phospho-5-dehydro-2-deoxy-D-gluconate + ADP + H(+). Its pathway is polyol metabolism; myo-inositol degradation into acetyl-CoA; acetyl-CoA from myo-inositol: step 5/7. Functionally, catalyzes the phosphorylation of 5-dehydro-2-deoxy-D-gluconate (2-deoxy-5-keto-D-gluconate or DKG) to 6-phospho-5-dehydro-2-deoxy-D-gluconate (DKGP). The protein is 5-dehydro-2-deoxygluconokinase of Bacillus anthracis (strain A0248).